The following is a 261-amino-acid chain: Mite allergen Eur m 3 (261 aa).

The first 18 residues, 1-18 (MVICNAIIVLLLAFNTLA), serve as a signal peptide directing secretion. A propeptide spanning residues 19 to 29 (NPILPSSPNAT) is cleaved from the precursor. Residues 30–260 (IVGGQKAKAG…FIDWIDSKRS (231 aa)) form the Peptidase S1 domain. C54 and C70 form a disulfide bridge. Active-site charge relay system residues include H69 and D114. Disulfide bonds link C181/C198 and C210/C236. The active-site Charge relay system is the S214.

This sequence belongs to the peptidase S1 family.

The protein resides in the secreted. This Euroglyphus maynei (Mayne's house dust mite) protein is Mite allergen Eur m 3 (EURM3).